Consider the following 360-residue polypeptide: Phospho-N-acetylmuramoyl-pentapeptide-transferase (360 aa).

The next 10 membrane-spanning stretches (helical) occupy residues 27 to 47, 71 to 91, 93 to 113, 128 to 148, 168 to 188, 199 to 219, 239 to 259, 262 to 282, 288 to 308, and 337 to 357; these read GAMI…INSL, TPTM…LLWA, LASV…AIGF, FSGK…AFTI, LVIN…VGAG, GLAI…AYLS, LAVV…FNAP, AIFM…TVAV, IVLA…IIQV, and QVVI…LSTL.

Belongs to the glycosyltransferase 4 family. MraY subfamily. Requires Mg(2+) as cofactor.

It is found in the cell inner membrane. It catalyses the reaction UDP-N-acetyl-alpha-D-muramoyl-L-alanyl-gamma-D-glutamyl-meso-2,6-diaminopimeloyl-D-alanyl-D-alanine + di-trans,octa-cis-undecaprenyl phosphate = di-trans,octa-cis-undecaprenyl diphospho-N-acetyl-alpha-D-muramoyl-L-alanyl-D-glutamyl-meso-2,6-diaminopimeloyl-D-alanyl-D-alanine + UMP. Its pathway is cell wall biogenesis; peptidoglycan biosynthesis. Catalyzes the initial step of the lipid cycle reactions in the biosynthesis of the cell wall peptidoglycan: transfers peptidoglycan precursor phospho-MurNAc-pentapeptide from UDP-MurNAc-pentapeptide onto the lipid carrier undecaprenyl phosphate, yielding undecaprenyl-pyrophosphoryl-MurNAc-pentapeptide, known as lipid I. The polypeptide is Phospho-N-acetylmuramoyl-pentapeptide-transferase (Brucella ovis (strain ATCC 25840 / 63/290 / NCTC 10512)).